A 281-amino-acid polypeptide reads, in one-letter code: Homoserine kinase (281 aa).

An ATP-binding site is contributed by 83-93 (PVSSGLGSSAA).

The protein belongs to the GHMP kinase family. Homoserine kinase subfamily.

It localises to the cytoplasm. The enzyme catalyses L-homoserine + ATP = O-phospho-L-homoserine + ADP + H(+). It participates in amino-acid biosynthesis; L-threonine biosynthesis; L-threonine from L-aspartate: step 4/5. Functionally, catalyzes the ATP-dependent phosphorylation of L-homoserine to L-homoserine phosphate. This chain is Homoserine kinase, found in Thermotoga petrophila (strain ATCC BAA-488 / DSM 13995 / JCM 10881 / RKU-1).